A 132-amino-acid chain; its full sequence is Ig kappa chain V-III region MOPC 321 (132 aa).

Positions 1-20 (METDTLLLWVLLLWVPGSTG) are cleaved as a signal peptide. The interval 21 to 43 (DIVLTQSPASLAVSLGQRATISC) is framework-1. A disulfide bond links cysteine 43 and cysteine 112. The complementarity-determining-1 stretch occupies residues 44-58 (RASKSVNTYGNSFMZ). The interval 59-73 (WYZZKPGZPPKLLIY) is framework-2. The tract at residues 74 to 80 (RASNLZS) is complementarity-determining-2. The framework-3 stretch occupies residues 81 to 112 (GIPARFSGSGSRTBFTLTIBPVZABDVATYFC). Residues 113–121 (ZZSBZBPWT) form a complementarity-determining-3 region. Residues 122–131 (FGSGTKLEIK) form a framework-4 region.

The chain is Ig kappa chain V-III region MOPC 321 from Mus musculus (Mouse).